The sequence spans 1607 residues: MNAEMREGSSALPQLQAHSPVADNIDLMDIDEPASNGSFEESPATPFDDDAFVNAGDTDQEDDDPDTKKWIVNDSRKPRKISEKKRADHAAFDVWIEENQQDLSKGLDKFIVDDDGKTFQSLIRDFENKRIITSPRDYQLELFERAKTQNTIAVLDTGSGKTLIAALLLRWTIQNELEDRSKRLPKRIAFFLVDKVALVFQQHAVLACNLDYPLEKFCGDMVEDVTQDFWHKTFDENMAIVCTAEILYQCLTHSYIRMDQVNLLVFDEAHHTKKNHPYARIIKDFYAEVKDLNKRLRISRAMTASPVDAQIDPKIARSPELEGLLHSQIATVADPTALHNSSTKLKREVTVEYGKCLPEFETGLNRALKDLVGEHRLFQKPFAFTATAASELGPWCADRYWQLFFRGEEVVKLEAKTEREILRKSAYSQEIAAQVNKVREAHRLVGQHEFASPSSDLLSSKVVILLRILRGEFRGVDHKRRCIVFVRQRNVASLLTDLLQQPEMRIPGLEPGILVGGGRPEASYDNAKVTYRDQVLTIIKFKKGELNCIFATSVAEEGLDIPDCNVIIRYDLNNTLIQYIQSRGRARQEGSIYIHMVESENEEHVKKVCQNQESEDALRKFCEALPADRKLTGNNFDMEYFLRKEKDQRQYTVPETGARLNYKQSLICLAAFVASLPHPPEVNLTAGYLVLSVPGGYQCEVTLPESSPIRSATGKVYASKAVAKCSAAYEMCLMLIKGKYLDQHLRPTFTKQLPAMRNARLAVSSKKKEQYKMRIKPELWSVLGEPTELFAMALTLADPTALARHSSPLLLLTRQPIPQIASFPLYFGKNRSSAVHCVPVPGRVELDDNQIQGLVAVTLAIFKDIFSKEYEATAAQLPYFLAPTLMQHGSDFTSVTDLSRIVDWGAVTFVRDNERVAYALDDEADEFFKNKYVADPYDGSRKFFLRGRRHDMKPTDMVPEGIVTPGHRAWRVSCKTHDILNYSLSAWSKSRAFLTPREDQPVVEAEVLPIRRNLLDDHIGDDDLEPKPCFIVLEPLRISPLPVDLVAMAYNFPAIMHRIDSNLVALEACKMLNLNVRPDLALEAFTKDSDNSGEHDAEQISFQSGMGNNYERLEFLGDCFLKMATTISIFTLIPDKAEFEYHVERMLLICNRNLFNNALEVKLEEHIRSMAFDRRSWYPEGLTLKKGKRKDLTRQHVLADKTIADVCEALIGAAYLTAQEQTPPNFDLAIRAVTVMVKDKNHTMTSYSDYYAAYSPPAWQTAPCNSTQLDMAARFEARMGYAFTHPRLLRSAFQHPTYPSVYEKLPSYQRLEFLGDALLDMASVEFLFHRFPGADPQWLTEHKMAMVSNQFLGCLAVYLGFHRAISYCASAIQKEITEYVTEIEDALQSARDDASKTPCNRHATTPSPGDLPAESFARDFWVRCSRPPKCLPDVVEAYVGAVFVDSRYDFARVRAFFADHVRPFFEDMRLYDAFANKHPVTFLAGIMQGRMRCAEWRLLVKDLPPVVGAGAGTELETPQVVCAVRVHGLTLAHAVAASGRYGKIAAAKKAIQVLEGMDAEAFRKAYGCACVLGEEEQQAAQTIATELEVFPAFSASGLEVAHHGSAV.

Positions 1–74 are disordered; it reads MNAEMREGSS…PDTKKWIVND (74 aa). In terms of domain architecture, Helicase ATP-binding spans 142–324; that stretch reads LFERAKTQNT…IARSPELEGL (183 aa). Residue 155–162 participates in ATP binding; that stretch reads LDTGSGKT. Residues 267–270 carry the DEAH box motif; sequence DEAH. The Helicase C-terminal domain occupies 461-632; it reads KVVILLRILR…EALPADRKLT (172 aa). Positions 665-755 constitute a Dicer dsRNA-binding fold domain; that stretch reads SLICLAAFVA…RPTFTKQLPA (91 aa). Residues 905 to 1040 form the PAZ domain; the sequence is GAVTFVRDNE…IVLEPLRISP (136 aa). RNase III domains lie at 1063–1219 and 1272–1447; these read LVAL…LTAQ and AARF…VDSR. E1312, D1433, and E1436 together coordinate Mg(2+). The 79-residue stretch at 1478-1556 folds into the DRBM domain; that stretch reads HPVTFLAGIM…AKKAIQVLEG (79 aa). 4 residues coordinate Zn(2+): C1493, H1527, C1568, and C1570.

It belongs to the helicase family. Dicer subfamily. The cofactor is Mg(2+). Requires Mn(2+) as cofactor.

In terms of biological role, dicer-like endonuclease involved in cleaving double-stranded RNA in the RNA interference (RNAi) pathway. Produces 21 to 25 bp dsRNAs (siRNAs) which target the selective destruction of homologous RNAs leading to sequence-specific suppression of gene expression, called post-transcriptional gene silencing (PTGS). Part of a broad host defense response against viral infection and transposons. This chain is Dicer-like protein 1 (DCL1), found in Chaetomium globosum (strain ATCC 6205 / CBS 148.51 / DSM 1962 / NBRC 6347 / NRRL 1970) (Soil fungus).